The following is a 141-amino-acid chain: Large ribosomal subunit protein uL11 (141 aa).

This sequence belongs to the universal ribosomal protein uL11 family. In terms of assembly, part of the ribosomal stalk of the 50S ribosomal subunit. Interacts with L10 and the large rRNA to form the base of the stalk. L10 forms an elongated spine to which L12 dimers bind in a sequential fashion forming a multimeric L10(L12)X complex. Post-translationally, one or more lysine residues are methylated.

Forms part of the ribosomal stalk which helps the ribosome interact with GTP-bound translation factors. The polypeptide is Large ribosomal subunit protein uL11 (Fusobacterium nucleatum subsp. nucleatum (strain ATCC 25586 / DSM 15643 / BCRC 10681 / CIP 101130 / JCM 8532 / KCTC 2640 / LMG 13131 / VPI 4355)).